Consider the following 1001-residue polypeptide: RNA-binding protein 12B (1001 aa).

A phosphoserine mark is found at serine 98, serine 101, and serine 112. Lysine 114 participates in a covalent cross-link: Glycyl lysine isopeptide (Lys-Gly) (interchain with G-Cter in SUMO2). Residues 119 to 128 are compositionally biased toward polar residues; that stretch reads NSGYGSSINQ. The disordered stretch occupies residues 119–147; the sequence is NSGYGSSINQDAGFHTNGTGHGNLRPRKT. Residue lysine 151 forms a Glycyl lysine isopeptide (Lys-Gly) (interchain with G-Cter in SUMO2) linkage. In terms of domain architecture, RRM 1 spans 155–230; the sequence is PYLFLRGLPY…RFIEVMQGSE (76 aa). Positions 247–262 are enriched in basic and acidic residues; it reads LRRSEEHSPPRGINDR. The disordered stretch occupies residues 247–278; the sequence is LRRSEEHSPPRGINDRHFRKRSHSKSPRRTRS. Residues serine 250 and serine 254 each carry the phosphoserine modification. Residues 263 to 278 show a composition bias toward basic residues; sequence HFRKRSHSKSPRRTRS. Residue threonine 276 is modified to Phosphothreonine. Serine 278, serine 280, serine 292, and serine 294 each carry phosphoserine. The RRM 2 domain occupies 284–360; sequence FYVHLKNLSL…RPVHIDPISR (77 aa). At lysine 319 the chain carries N6-acetyllysine. Lysine 335 participates in a covalent cross-link: Glycyl lysine isopeptide (Lys-Gly) (interchain with G-Cter in SUMO2). At serine 377 the chain carries Phosphoserine. Residues 400–477 form the RRM 3 domain; the sequence is LCIYIRNFPF…TEVLLRLISE (78 aa). Glycyl lysine isopeptide (Lys-Gly) (interchain with G-Cter in SUMO2) cross-links involve residues lysine 514 and lysine 541. The tract at residues 544–587 is disordered; it reads QRDFRQPDRHPPEDFRHSSEDFRFPPEDFRHSPEDFRRPREEDF. A phosphoserine mark is found at serine 575, serine 591, and serine 638. The span at 631–881 shows a compositional bias: basic and acidic residues; it reads LEEDFRRSPT…FRSPPDDFRS (251 aa). Positions 631–882 are disordered; that stretch reads LEEDFRRSPT…RSPPDDFRSH (252 aa). A Phosphothreonine modification is found at threonine 640. Phosphoserine is present on residues serine 710 and serine 718. Lysine 895 is covalently cross-linked (Glycyl lysine isopeptide (Lys-Gly) (interchain with G-Cter in SUMO2)). The RRM 4 domain occupies 925–1001; it reads TPIKIMNLPF…GPRKVKLTLL (77 aa).

The polypeptide is RNA-binding protein 12B (RBM12B) (Homo sapiens (Human)).